Reading from the N-terminus, the 555-residue chain is HERV-H_2q24.1 provirus ancestral Env polyprotein (555 aa).

A signal peptide spans 1–35; it reads MILAGRAPSNTSTLMKFYSLLLYSLLFSFPFLYHP. At 36–515 the chain is on the extracellular side; sequence LPLPSYLHHT…WALSNWMSWV (480 aa). N47 is a glycosylation site (N-linked (GlcNAc...) asparagine). The CXXC motif lies at 64–67; the sequence is CWLC. 5 N-linked (GlcNAc...) asparagine glycosylation sites follow: N222, N265, N283, N352, and N370. The tract at residues 388–408 is fusion peptide; the sequence is VIPLIPLMVGLGLSASTIALS. N-linked (GlcNAc...) asparagine glycosylation is present at N475. The chain crosses the membrane as a helical span at residues 516–536; that stretch reads LPILSPLIPIFLLLLFGPCIF. The Cytoplasmic portion of the chain corresponds to 537 to 555; the sequence is HLVSQFIQNRIQAITNHSI.

Belongs to the gamma type-C retroviral envelope protein family. HERV class-I H env subfamily. The surface (SU) and transmembrane (TM) proteins form a heterodimer. SU and TM are attached by noncovalent interactions or by a labile interchain disulfide bond. Specific enzymatic cleavages in vivo yield the mature SU and TM proteins. Low expression in testis.

It is found in the virion. Its subcellular location is the cell membrane. Retroviral envelope proteins mediate receptor recognition and membrane fusion during early infection. Endogenous envelope proteins may have kept, lost or modified their original function during evolution. This endogenous envelope protein has lost its original fusogenic properties. Its function is as follows. SU mediates receptor recognition. Functionally, TM anchors the envelope heterodimer to the viral membrane through one transmembrane domain. The other hydrophobic domain, called fusion peptide, mediates fusion of the viral membrane with the target cell membrane. The polypeptide is HERV-H_2q24.1 provirus ancestral Env polyprotein (Homo sapiens (Human)).